A 427-amino-acid polypeptide reads, in one-letter code: UDP-N-acetyl-D-mannosamine dehydrogenase (427 aa).

Tyr19, Ile20, Asp39, Arg44, Thr91, and Thr130 together coordinate NAD(+). Residues Arg155, Val156, Lys207, Asn211, Arg214, His245, Arg247, and Gly258 each contribute to the UDP-N-acetyl-alpha-D-mannosaminouronate site. Residue Lys207 is the Proton donor/acceptor of the active site. Cys261 functions as the Nucleophile in the catalytic mechanism. UDP-N-acetyl-alpha-D-mannosaminouronate-binding residues include Tyr318 and Lys319. Arg326 contributes to the NAD(+) binding site. Position 404 (Lys404) interacts with UDP-N-acetyl-alpha-D-mannosaminouronate.

Belongs to the UDP-glucose/GDP-mannose dehydrogenase family. In terms of assembly, homotetramer; probably dimer of dimers.

The catalysed reaction is UDP-N-acetyl-alpha-D-mannosamine + 2 NAD(+) + H2O = UDP-N-acetyl-alpha-D-mannosaminouronate + 2 NADH + 3 H(+). Catalyzes the four-electron oxidation of UDP-N-acetyl-D-mannosamine (UDP-ManNAc), reducing NAD(+) and releasing UDP-N-acetylmannosaminuronic acid (UDP-ManNAcA). This chain is UDP-N-acetyl-D-mannosamine dehydrogenase (wecC), found in Methanococcus maripaludis (strain C7 / ATCC BAA-1331).